The following is a 245-amino-acid chain: tRNA (guanine-N(7)-)-methyltransferase (245 aa).

S-adenosyl-L-methionine is bound by residues glutamate 69, glutamate 94, aspartate 121, and aspartate 144. Aspartate 144 is a catalytic residue. Substrate is bound by residues lysine 148, aspartate 180, and 217–220; that span reads TKFE. Residues 200–225 are disordered; the sequence is NLSSSGDYVPRPENRPKTKFERRGEG. Basic and acidic residues predominate over residues 209–225; the sequence is PRPENRPKTKFERRGEG.

It belongs to the class I-like SAM-binding methyltransferase superfamily. TrmB family.

It carries out the reaction guanosine(46) in tRNA + S-adenosyl-L-methionine = N(7)-methylguanosine(46) in tRNA + S-adenosyl-L-homocysteine. It functions in the pathway tRNA modification; N(7)-methylguanine-tRNA biosynthesis. Catalyzes the formation of N(7)-methylguanine at position 46 (m7G46) in tRNA. The protein is tRNA (guanine-N(7)-)-methyltransferase of Idiomarina loihiensis (strain ATCC BAA-735 / DSM 15497 / L2-TR).